Reading from the N-terminus, the 125-residue chain is Small ribosomal subunit protein bS6 (125 aa).

The segment at 96–125 is disordered; that stretch reads VTEASPMKAAKEERKPLAEVENNDFEDAEE. Over residues 104 to 113 the composition is skewed to basic and acidic residues; sequence AAKEERKPLA. A compositionally biased stretch (acidic residues) spans 116–125; that stretch reads ENNDFEDAEE.

Belongs to the bacterial ribosomal protein bS6 family.

In terms of biological role, binds together with bS18 to 16S ribosomal RNA. This Haemophilus influenzae (strain 86-028NP) protein is Small ribosomal subunit protein bS6.